A 91-amino-acid polypeptide reads, in one-letter code: Small ribosomal subunit protein uS19 (91 aa).

It belongs to the universal ribosomal protein uS19 family.

Protein S19 forms a complex with S13 that binds strongly to the 16S ribosomal RNA. The chain is Small ribosomal subunit protein uS19 from Cupriavidus pinatubonensis (strain JMP 134 / LMG 1197) (Cupriavidus necator (strain JMP 134)).